We begin with the raw amino-acid sequence, 554 residues long: MFCIQCEQTIRTPAGNGCSYSQGMCGKLAATSDLQDLLIYILQGVSAYAEKARAFGIIVPAIDTFVPKAFFATLTNVNFDDERIMAYTQQAYGYRAQLQAAYESACKAQGQAIETLIPAASLVLASVKEEMLALAAQALPNRGKEEVNEDIMGLRLLCLYGLKGAAAYMEHARVLDQTDSEVAAKFHEIMAFLGSDSVDADKLFATAMEIGQLNYRVMAMLDEGETQAFGHPEPTQVNTVAVKGKAILVSGHDMKDLELILQQTEGKGINVFTHGEMLPALAYPELKKYPHLVGNYGSAWQNQQKEFANFPGAVVMTSNCIIDPNVGDYADRIFTRSIVGWPGVTHIVGDDFSAVIDKALSLEGFAYDEIPHHITIGFARNALMAAAPAVVENVKNGSIKHFFLVGGCDGDKAERSYFTDIAKAAPKDSIIMTLGCGKYKFNKLAFGDINGIPRLLDIGQCNDAYSAIQLAIALSEVFECEINELPLSLVLSWFEQKAIVILLTLLSLGVKNIRTGPSAPAFLTPNLLKVLEDKFGLRSTTTVEQDLNAILNVA.

Positions 3, 6, 18, and 25 each coordinate [2Fe-2S] cluster. Hybrid [4Fe-2O-2S] cluster-binding residues include His252, Glu276, Cys320, Cys408, Cys436, Cys461, Glu495, and Lys497. Cys408 is modified (cysteine persulfide).

It belongs to the HCP family. [2Fe-2S] cluster is required as a cofactor. The cofactor is hybrid [4Fe-2O-2S] cluster.

The protein localises to the cytoplasm. It carries out the reaction A + NH4(+) + H2O = hydroxylamine + AH2 + H(+). In terms of biological role, catalyzes the reduction of hydroxylamine to form NH(3) and H(2)O. In Shewanella loihica (strain ATCC BAA-1088 / PV-4), this protein is Hydroxylamine reductase.